Reading from the N-terminus, the 502-residue chain is 4,4'-diapophytoene desaturase (4,4'-diaponeurosporene-forming) (502 aa).

5–17 contacts FAD; sequence VIGAGVTGLAAAA.

Belongs to the carotenoid/retinoid oxidoreductase family. CrtN subfamily.

The enzyme catalyses 15-cis-4,4'-diapophytoene + 3 FAD + 3 H(+) = all-trans-4,4'-diaponeurosporene + 3 FADH2. It participates in carotenoid biosynthesis; staphyloxanthin biosynthesis; staphyloxanthin from farnesyl diphosphate: step 2/5. Functionally, involved in the biosynthesis of the yellow-orange carotenoid staphyloxanthin, which plays a role in the virulence via its protective function against oxidative stress. Catalyzes three successive dehydrogenation reactions that lead to the introduction of three double bonds into 4,4'-diapophytoene (dehydrosqualene), with 4,4'-diapophytofluene and 4,4'-diapo-zeta-carotene as intermediates, and 4,4'-diaponeurosporene (the major deep-yellow pigment in staphylococci strains) as the end product. The sequence is that of 4,4'-diapophytoene desaturase (4,4'-diaponeurosporene-forming) from Staphylococcus aureus (strain USA300).